The following is a 61-amino-acid chain: MPFVTIQFLEGRTDDQKKALVSEVTEVVSKNLKAPKENIHVILEEMKKTDYGVGGVRKSDI.

P2 functions as the Proton acceptor; via imino nitrogen in the catalytic mechanism.

This sequence belongs to the 4-oxalocrotonate tautomerase family.

The protein is Probable tautomerase lmo2564 of Listeria monocytogenes serovar 1/2a (strain ATCC BAA-679 / EGD-e).